The sequence spans 111 residues: uncharacterized protein (111 aa).

Helical transmembrane passes span 4–23 (LHQVLIACVIGGIMGILGHV), 39–61 (IYLGFLEDWFIGMTASILLVLSA), and 65–84 (SGIQLVILSIISGYGGEAVL).

The protein localises to the cell membrane. This is an uncharacterized protein from Bacillus subtilis (strain 168).